A 186-amino-acid polypeptide reads, in one-letter code: ATP synthase subunit b, chloroplastic (186 aa).

Residues 26 to 44 (ILETNLINLGVVIGTLLYF) traverse the membrane as a helical segment.

Belongs to the ATPase B chain family. F-type ATPases have 2 components, F(1) - the catalytic core - and F(0) - the membrane proton channel. F(1) has five subunits: alpha(3), beta(3), gamma(1), delta(1), epsilon(1). F(0) has four main subunits: a(1), b(1), b'(1) and c(10-14). The alpha and beta chains form an alternating ring which encloses part of the gamma chain. F(1) is attached to F(0) by a central stalk formed by the gamma and epsilon chains, while a peripheral stalk is formed by the delta, b and b' chains.

Its subcellular location is the plastid. It is found in the chloroplast thylakoid membrane. Functionally, f(1)F(0) ATP synthase produces ATP from ADP in the presence of a proton or sodium gradient. F-type ATPases consist of two structural domains, F(1) containing the extramembraneous catalytic core and F(0) containing the membrane proton channel, linked together by a central stalk and a peripheral stalk. During catalysis, ATP synthesis in the catalytic domain of F(1) is coupled via a rotary mechanism of the central stalk subunits to proton translocation. Component of the F(0) channel, it forms part of the peripheral stalk, linking F(1) to F(0). The sequence is that of ATP synthase subunit b, chloroplastic from Chara vulgaris (Common stonewort).